Consider the following 126-residue polypeptide: Small ribosomal subunit protein uS13 (126 aa).

Positions 101 to 126 (QKTKNNCRTRKGKKKTVANKKKKINK) are disordered.

This sequence belongs to the universal ribosomal protein uS13 family. In terms of assembly, part of the 30S ribosomal subunit. Forms a loose heterodimer with protein S19. Forms two bridges to the 50S subunit in the 70S ribosome.

In terms of biological role, located at the top of the head of the 30S subunit, it contacts several helices of the 16S rRNA. In the 70S ribosome it contacts the 23S rRNA (bridge B1a) and protein L5 of the 50S subunit (bridge B1b), connecting the 2 subunits; these bridges are implicated in subunit movement. Contacts the tRNAs in the A and P-sites. In Karelsulcia muelleri (strain GWSS) (Sulcia muelleri), this protein is Small ribosomal subunit protein uS13.